A 461-amino-acid chain; its full sequence is Alpha-tubulin N-acetyltransferase 1 (461 aa).

The region spanning valine 2–phenylalanine 189 is the N-acetyltransferase domain. Acetyl-CoA is bound by residues phenylalanine 123 to lysine 136 and serine 159 to lysine 168. Disordered stretches follow at residues asparagine 196 to aspartate 295, asparagine 314 to alanine 362, and arginine 418 to glycine 443. Positions arginine 233–proline 254 are enriched in polar residues. The segment covering glycine 283 to asparagine 293 has biased composition (low complexity). Residues proline 318–proline 336 show a composition bias toward acidic residues. A compositionally biased stretch (pro residues) spans isoleucine 339–valine 356. Polar residues predominate over residues serine 426–serine 439.

This sequence belongs to the acetyltransferase ATAT1 family.

It catalyses the reaction L-lysyl-[alpha-tubulin] + acetyl-CoA = N(6)-acetyl-L-lysyl-[alpha-tubulin] + CoA + H(+). In terms of biological role, specifically acetylates 'Lys-40' in alpha-tubulin on the lumenal side of microtubules. Promotes microtubule destabilization and accelerates microtubule dynamics; this activity may be independent of acetylation activity. Acetylates alpha-tubulin with a slow enzymatic rate, due to a catalytic site that is not optimized for acetyl transfer. Enters the microtubule through each end and diffuses quickly throughout the lumen of microtubules. Acetylates only long/old microtubules because of its slow acetylation rate since it does not have time to act on dynamically unstable microtubules before the enzyme is released. Acetylates central spindle microtubules. This chain is Alpha-tubulin N-acetyltransferase 1, found in Drosophila melanogaster (Fruit fly).